Consider the following 138-residue polypeptide: Large ribosomal subunit protein uL16 (138 aa).

A compositionally biased stretch (basic residues) spans Met-1–Gly-16. The segment at Met-1–Gly-24 is disordered.

The protein belongs to the universal ribosomal protein uL16 family. Part of the 50S ribosomal subunit.

Binds 23S rRNA and is also seen to make contacts with the A and possibly P site tRNAs. The polypeptide is Large ribosomal subunit protein uL16 (Arthrobacter sp. (strain FB24)).